Here is a 338-residue protein sequence, read N- to C-terminus: Ornithine carbamoyltransferase (338 aa).

Residues 56–59, arginine 107, and 134–137 contribute to the carbamoyl phosphate site; these read STRT and HPTQ. L-ornithine contacts are provided by residues asparagine 168, aspartate 232, and 236–237; that span reads SM. Carbamoyl phosphate contacts are provided by residues 274–275 and arginine 320; that span reads CL.

Belongs to the aspartate/ornithine carbamoyltransferase superfamily. OTCase family.

It localises to the cytoplasm. The enzyme catalyses carbamoyl phosphate + L-ornithine = L-citrulline + phosphate + H(+). It functions in the pathway amino-acid degradation; L-arginine degradation via ADI pathway; carbamoyl phosphate from L-arginine: step 2/2. Functionally, reversibly catalyzes the transfer of the carbamoyl group from carbamoyl phosphate (CP) to the N(epsilon) atom of ornithine (ORN) to produce L-citrulline. This chain is Ornithine carbamoyltransferase, found in Buchnera aphidicola subsp. Acyrthosiphon pisum (strain 5A).